Reading from the N-terminus, the 172-residue chain is Shikimate kinase (172 aa).

11–16 provides a ligand contact to ATP; the sequence is GSGKTT. Position 15 (T15) interacts with Mg(2+). 3 residues coordinate substrate: D33, R57, and G79. Residue R117 participates in ATP binding. R136 is a substrate binding site.

The protein belongs to the shikimate kinase family. In terms of assembly, monomer. Mg(2+) is required as a cofactor.

The protein localises to the cytoplasm. It catalyses the reaction shikimate + ATP = 3-phosphoshikimate + ADP + H(+). It functions in the pathway metabolic intermediate biosynthesis; chorismate biosynthesis; chorismate from D-erythrose 4-phosphate and phosphoenolpyruvate: step 5/7. In terms of biological role, catalyzes the specific phosphorylation of the 3-hydroxyl group of shikimic acid using ATP as a cosubstrate. This chain is Shikimate kinase, found in Caldicellulosiruptor saccharolyticus (strain ATCC 43494 / DSM 8903 / Tp8T 6331).